Here is a 153-residue protein sequence, read N- to C-terminus: 3-hydroxyacyl-[acyl-carrier-protein] dehydratase FabZ (153 aa).

The active site involves His53.

Belongs to the thioester dehydratase family. FabZ subfamily.

The protein localises to the cytoplasm. The catalysed reaction is a (3R)-hydroxyacyl-[ACP] = a (2E)-enoyl-[ACP] + H2O. Involved in unsaturated fatty acids biosynthesis. Catalyzes the dehydration of short chain beta-hydroxyacyl-ACPs and long chain saturated and unsaturated beta-hydroxyacyl-ACPs. The polypeptide is 3-hydroxyacyl-[acyl-carrier-protein] dehydratase FabZ (Lawsonia intracellularis (strain PHE/MN1-00)).